A 189-amino-acid polypeptide reads, in one-letter code: GTP cyclohydrolase 1 (189 aa).

The Zn(2+) site is built by C79, H82, and C150.

This sequence belongs to the GTP cyclohydrolase I family. As to quaternary structure, homomer.

It carries out the reaction GTP + H2O = 7,8-dihydroneopterin 3'-triphosphate + formate + H(+). Its pathway is cofactor biosynthesis; 7,8-dihydroneopterin triphosphate biosynthesis; 7,8-dihydroneopterin triphosphate from GTP: step 1/1. This is GTP cyclohydrolase 1 from Rickettsia rickettsii (strain Iowa).